Consider the following 200-residue polypeptide: MARVLVVLSVVVASLFFSQGATFENQRLFNNAVIRVQHLHQLAAKMMDDFEEALLPEERKQLSKIFPLSFCNSDSIEAPAGKDETQKSSVLKLLHTSYRLIESWEFPSKNLGNPNHISEKLADLKMGIGVLIEGCLDGQTSLDENDSLAPPFEDFYQTLSEGNLRKSFRLLSCFKKDMHKVETYLSVAKCRRSLDSNCTL.

A signal peptide spans 1–22 (MARVLVVLSVVVASLFFSQGAT). Residue His-38 coordinates Zn(2+). The cysteines at positions 71 and 173 are disulfide-linked. A Zn(2+)-binding site is contributed by Glu-182. Cys-190 and Cys-198 are joined by a disulfide.

Belongs to the somatotropin/prolactin family.

Its subcellular location is the secreted. Growth hormone plays an important role in growth control and is involved in the regulation of several anabolic processes. Implicated as an osmoregulatory substance important for seawater adaptation. This Pangasianodon gigas (Mekong giant catfish) protein is Somatotropin (gh).